The chain runs to 104 residues: Large ribosomal subunit protein uL24 (104 aa).

It belongs to the universal ribosomal protein uL24 family. Part of the 50S ribosomal subunit.

Its function is as follows. One of two assembly initiator proteins, it binds directly to the 5'-end of the 23S rRNA, where it nucleates assembly of the 50S subunit. Functionally, one of the proteins that surrounds the polypeptide exit tunnel on the outside of the subunit. The polypeptide is Large ribosomal subunit protein uL24 (Brevibacillus brevis (strain 47 / JCM 6285 / NBRC 100599)).